Here is a 405-residue protein sequence, read N- to C-terminus: Arginine biosynthesis bifunctional protein ArgJ (405 aa).

Residues threonine 155, lysine 181, threonine 192, glutamate 278, asparagine 400, and threonine 405 each coordinate substrate. The Nucleophile role is filled by threonine 192.

This sequence belongs to the ArgJ family. As to quaternary structure, heterotetramer of two alpha and two beta chains.

Its subcellular location is the cytoplasm. It catalyses the reaction N(2)-acetyl-L-ornithine + L-glutamate = N-acetyl-L-glutamate + L-ornithine. The catalysed reaction is L-glutamate + acetyl-CoA = N-acetyl-L-glutamate + CoA + H(+). The protein operates within amino-acid biosynthesis; L-arginine biosynthesis; L-ornithine and N-acetyl-L-glutamate from L-glutamate and N(2)-acetyl-L-ornithine (cyclic): step 1/1. It participates in amino-acid biosynthesis; L-arginine biosynthesis; N(2)-acetyl-L-ornithine from L-glutamate: step 1/4. Functionally, catalyzes two activities which are involved in the cyclic version of arginine biosynthesis: the synthesis of N-acetylglutamate from glutamate and acetyl-CoA as the acetyl donor, and of ornithine by transacetylation between N(2)-acetylornithine and glutamate. The chain is Arginine biosynthesis bifunctional protein ArgJ from Dehalococcoides mccartyi (strain CBDB1).